We begin with the raw amino-acid sequence, 394 residues long: Chalcone synthase (394 aa).

C168 is a catalytic residue.

Belongs to the thiolase-like superfamily. Chalcone/stilbene synthases family.

The catalysed reaction is (E)-4-coumaroyl-CoA + 3 malonyl-CoA + 3 H(+) = 2',4,4',6'-tetrahydroxychalcone + 3 CO2 + 4 CoA. It participates in secondary metabolite biosynthesis; flavonoid biosynthesis. Its function is as follows. The primary product of this enzyme is 4,2',4',6'-tetrahydroxychalcone (also termed naringenin-chalcone or chalcone) which can under specific conditions spontaneously isomerize into naringenin. This is Chalcone synthase (CHS) from Raphanus sativus (Radish).